Here is a 222-residue protein sequence, read N- to C-terminus: Large ribosomal subunit protein mL64 (222 aa).

Disordered stretches follow at residues 21-47 and 186-222; these read RSRS…NLLT and QRKR…EPSS. Residues 98–207 adopt a coiled-coil conformation; it reads TMQESLRLQQ…KKEARIAAMA (110 aa). The Nuclear localization signal signature appears at 184–200; that stretch reads KQQRKRLKEERQRQKKE. Basic and acidic residues predominate over residues 186–202; the sequence is QRKRLKEERQRQKKEAR. The span at 203–215 shows a compositional bias: low complexity; the sequence is IAAMASAEAQDSA.

The protein belongs to the mitochondrion-specific ribosomal protein mL64 family. In terms of assembly, component of the mitochondrial ribosome large subunit (39S) which comprises a 16S rRNA and about 50 distinct proteins. Interacts with GADD45A, GADD45B and GADD45G. Interacts with NR4A1 via the NR4A1 AB domain. Interacts with ATAD3A and ATAD3B.

The protein localises to the mitochondrion. The protein resides in the nucleus. Functionally, acts as a negative regulator of G1 to S cell cycle phase progression by inhibiting cyclin-dependent kinases. Inhibitory effects are additive with GADD45 proteins but also occur in the absence of GADD45 proteins. Acts as a repressor of the orphan nuclear receptor NR4A1 by inhibiting AB domain-mediated transcriptional activity. May be involved in the hormone-mediated regulation of NR4A1 transcriptional activity. May play a role in mitochondrial protein synthesis. In Mus musculus (Mouse), this protein is Large ribosomal subunit protein mL64 (Gadd45gip1).